We begin with the raw amino-acid sequence, 198 residues long: Probable nicotinate-nucleotide adenylyltransferase (198 aa).

The protein belongs to the NadD family.

The catalysed reaction is nicotinate beta-D-ribonucleotide + ATP + H(+) = deamido-NAD(+) + diphosphate. It participates in cofactor biosynthesis; NAD(+) biosynthesis; deamido-NAD(+) from nicotinate D-ribonucleotide: step 1/1. Its function is as follows. Catalyzes the reversible adenylation of nicotinate mononucleotide (NaMN) to nicotinic acid adenine dinucleotide (NaAD). The polypeptide is Probable nicotinate-nucleotide adenylyltransferase (Herpetosiphon aurantiacus (strain ATCC 23779 / DSM 785 / 114-95)).